The following is a 22-amino-acid chain: Odorant-binding protein 1 (22 aa).

Belongs to the calycin superfamily. Lipocalin family. As to quaternary structure, homodimer. The N-terminus is blocked.

Functionally, binds the chemical odorant, 2-isobutyl-3-methoxypyrazine. The polypeptide is Odorant-binding protein 1 (Oryctolagus cuniculus (Rabbit)).